A 181-amino-acid chain; its full sequence is Large ribosomal subunit protein uL5 (181 aa).

Belongs to the universal ribosomal protein uL5 family. Part of the 50S ribosomal subunit; part of the 5S rRNA/L5/L18/L25 subcomplex. Contacts the 5S rRNA and the P site tRNA. Forms a bridge to the 30S subunit in the 70S ribosome.

This is one of the proteins that bind and probably mediate the attachment of the 5S RNA into the large ribosomal subunit, where it forms part of the central protuberance. In the 70S ribosome it contacts protein S13 of the 30S subunit (bridge B1b), connecting the 2 subunits; this bridge is implicated in subunit movement. Contacts the P site tRNA; the 5S rRNA and some of its associated proteins might help stabilize positioning of ribosome-bound tRNAs. The protein is Large ribosomal subunit protein uL5 of Colwellia psychrerythraea (strain 34H / ATCC BAA-681) (Vibrio psychroerythus).